A 211-amino-acid polypeptide reads, in one-letter code: Large ribosomal subunit protein uL4 (211 aa).

Over residues 41 to 53 the composition is skewed to polar residues; sequence QAHSRQGTASTLT. The segment at 41–85 is disordered; it reads QAHSRQGTASTLTRAEVRGGGRKPYKQKGTGRARQGSIRTPLRPG. Basic residues predominate over residues 60-71; the sequence is GGRKPYKQKGTG.

This sequence belongs to the universal ribosomal protein uL4 family. As to quaternary structure, part of the 50S ribosomal subunit.

Its function is as follows. One of the primary rRNA binding proteins, this protein initially binds near the 5'-end of the 23S rRNA. It is important during the early stages of 50S assembly. It makes multiple contacts with different domains of the 23S rRNA in the assembled 50S subunit and ribosome. Functionally, forms part of the polypeptide exit tunnel. The sequence is that of Large ribosomal subunit protein uL4 from Prochlorococcus marinus (strain SARG / CCMP1375 / SS120).